A 323-amino-acid chain; its full sequence is Putative HTH-type transcriptional regulatory protein Mbur_1811 (323 aa).

Positions 132-190 (LKEARMNVSMSLGALASELGVSRRTISKYEEGQMDASIDIVLHLEEILDMALAKSIDIL) constitute an HTH cro/C1-type domain. A DNA-binding region (H-T-H motif) is located at residues 143–162 (LGALASELGVSRRTISKYEE).

The chain is Putative HTH-type transcriptional regulatory protein Mbur_1811 from Methanococcoides burtonii (strain DSM 6242 / NBRC 107633 / OCM 468 / ACE-M).